We begin with the raw amino-acid sequence, 319 residues long: Acetyl-coenzyme A carboxylase carboxyl transferase subunit alpha (319 aa).

Positions 35-296 (NIDEEVHRLR…KAQLLADLAD (262 aa)) constitute a CoA carboxyltransferase C-terminal domain.

The protein belongs to the AccA family. In terms of assembly, acetyl-CoA carboxylase is a heterohexamer composed of biotin carboxyl carrier protein (AccB), biotin carboxylase (AccC) and two subunits each of ACCase subunit alpha (AccA) and ACCase subunit beta (AccD).

The protein localises to the cytoplasm. It catalyses the reaction N(6)-carboxybiotinyl-L-lysyl-[protein] + acetyl-CoA = N(6)-biotinyl-L-lysyl-[protein] + malonyl-CoA. Its pathway is lipid metabolism; malonyl-CoA biosynthesis; malonyl-CoA from acetyl-CoA: step 1/1. Component of the acetyl coenzyme A carboxylase (ACC) complex. First, biotin carboxylase catalyzes the carboxylation of biotin on its carrier protein (BCCP) and then the CO(2) group is transferred by the carboxyltransferase to acetyl-CoA to form malonyl-CoA. The protein is Acetyl-coenzyme A carboxylase carboxyl transferase subunit alpha of Shigella sonnei (strain Ss046).